A 550-amino-acid polypeptide reads, in one-letter code: Glucose-6-phosphate isomerase 2 (550 aa).

The Proton donor role is filled by glutamate 359. Catalysis depends on residues histidine 390 and lysine 514.

Belongs to the GPI family.

The protein localises to the cytoplasm. The catalysed reaction is alpha-D-glucose 6-phosphate = beta-D-fructose 6-phosphate. It participates in carbohydrate biosynthesis; gluconeogenesis. The protein operates within carbohydrate degradation; glycolysis; D-glyceraldehyde 3-phosphate and glycerone phosphate from D-glucose: step 2/4. Functionally, catalyzes the reversible isomerization of glucose-6-phosphate to fructose-6-phosphate. The sequence is that of Glucose-6-phosphate isomerase 2 from Streptomyces avermitilis (strain ATCC 31267 / DSM 46492 / JCM 5070 / NBRC 14893 / NCIMB 12804 / NRRL 8165 / MA-4680).